Here is a 425-residue protein sequence, read N- to C-terminus: Lysosome-associated membrane glycoprotein 2 (425 aa).

A signal peptide spans 1–27; the sequence is MAPPRCPAGLALLLLLLGACGFFQSYA. Residues 28 to 192 form a first lumenal domain region; it reads VEVDVKDASN…SKKESRCYAD (165 aa). Residues 28–389 are Lumenal-facing; that stretch reads VEVDVKDASN…EECFADSDLN (362 aa). N-linked (GlcNAc...) asparagine glycosylation is found at N37, N56, N62, N74, N100, N105, N120, N163, N170, N179, N206, N232, N239, N252, N276, N287, N298, N312, N320, and N331. A disulfide bond links C40 and C78. An intrachain disulfide couples C153 to C189. The segment at 193-238 is hinge; that stretch reads TPTAAPTVLPTVANVTTASTTISPAPTTAPKPAENPVTGNYSLKTG. The interval 239–390 is second lumenal domain; that stretch reads NKTCLLATVG…ECFADSDLNF (152 aa). A disulfide bond links C242 and C274. C345 and C382 are oxidised to a cystine. Residues 390 to 414 traverse the membrane as a helical segment; it reads FLIPVAVGMALGFLIILVFISYIIG. Over 415–425 the chain is Cytoplasmic; the sequence is RRKSRTGYQSV. Positions 416–419 are important for binding and subsequent lysosomal degradation of target proteins; sequence RKSR.

Belongs to the LAMP family. As to quaternary structure, monomer. Forms large homooligomers. Post-translationally, extensively N-glycosylated. Contains a minor proportion of O-linked glycans.

It is found in the lysosome membrane. Its subcellular location is the endosome membrane. The protein localises to the cell membrane. The protein resides in the cytoplasmic vesicle. It localises to the autophagosome membrane. In terms of biological role, lysosomal membrane glycoprotein which plays an important role in lysosome biogenesis, lysosomal pH regulation and autophagy. Plays an important role in chaperone-mediated autophagy, a process that mediates lysosomal degradation of proteins in response to various stresses and as part of the normal turnover of proteins with a long biological half-live. In the chaperone-mediated autophagy, acts downstream of chaperones, such as HSPA8/HSC70, which recognize and bind substrate proteins and mediate their recruitment to lysosomes, where target proteins bind LAMP2. Plays a role in lysosomal protein degradation in response to starvation. Required for the fusion of autophagosomes with lysosomes during autophagy. This is Lysosome-associated membrane glycoprotein 2 (LAMP2) from Gallus gallus (Chicken).